A 641-amino-acid chain; its full sequence is MKETKHQHTFSIRKSAYGAASVMVASCIFVIGGGVAEANDSTTQTTTPLEVAQTSQQETHTHQTPVTSLHTATPEHVDDSKEATPLPEKAESPKTEVTVQPSSHTQEVPALHKKTQQQPAYKDKTVPESTIASKSVESNKATENEMSPVEHHASNVEKREDRLETNETTPPSVDREFSHKIINNTHVNPKTDGQTNVNVDTKTIDTVSPKDDRIDTAQPKQVDVPKENTTAQNKFTSQASDKKPTVKAAPEAVQNPENPKNKDPFVFVHGFTGFVGEVAAKGENHWGGTKANLRNHLRKAGYETYEASVSALASNHERAVELYYYLKGGRVDYGAAHSEKYGHERYGKTYEGVLKDWKPGHPVHFIGHSMGGQTIRLLEHYLRFGDKAEIAYQQQHGGIISELFKGGQDNMVTSITTIATPHNGTHASDDIGNTPTIRNILYSFAQMSSHLGTIDFGMDHWGFKRKDGESLTDYNKRIAESKIWDSEDTGLYDLTREGAEKINQKTELNPNIYYKTYTGVATHETQLGKHIADLGMEFTKILTGNYIGSVDDILWRPNDGLVSEISSQHPSDEKNISVDENSELHKGTWQVMPTMKGWDHSDFIGNDALDTKHSAIELTNFYHSISDYLMRIEKAESTKNA.

An N-terminal signal peptide occupies residues 1-38 (MKETKHQHTFSIRKSAYGAASVMVASCIFVIGGGVAEA). Disordered regions lie at residues 41–174 (STTQ…PSVD) and 206–246 (TVSP…KPTV). Positions 53 to 64 (QTSQQETHTHQT) are enriched in low complexity. Basic and acidic residues predominate over residues 73-94 (TPEHVDDSKEATPLPEKAESPK). Composition is skewed to polar residues over residues 95-106 (TEVTVQPSSHTQ) and 127-139 (PEST…VESN). Positions 140 to 165 (KATENEMSPVEHHASNVEKREDRLET) are enriched in basic and acidic residues. The span at 227-239 (ENTTAQNKFTSQA) shows a compositional bias: polar residues. Catalysis depends on S369, which acts as the Nucleophile. A Ca(2+)-binding site is contributed by G535. D559 acts as the Charge relay system in catalysis. Position 599 (D599) interacts with Ca(2+). The active-site Charge relay system is the H600. 3 residues coordinate Ca(2+): D602, D607, and D610.

Belongs to the AB hydrolase superfamily. Lipase family. It depends on Ca(2+) as a cofactor.

Its subcellular location is the secreted. The enzyme catalyses a triacylglycerol + H2O = a diacylglycerol + a fatty acid + H(+). It carries out the reaction a 1,2-diacyl-sn-glycero-3-phosphocholine + H2O = a 2-acyl-sn-glycero-3-phosphocholine + a fatty acid + H(+). Functionally, has a broad substrate specificity hydrolyzing a variety of triglycerides and phosphatidylcholines. This Staphylococcus hyicus protein is Lipase (lip).